The sequence spans 369 residues: 5-amino-6-(D-ribitylamino)uracil--L-tyrosine 4-hydroxyphenyl transferase (369 aa).

Residues 56-292 (VTFVVNRNIN…AVARLYFGPL (237 aa)) form the Radical SAM core domain. Residues cysteine 70, cysteine 74, and cysteine 77 each contribute to the [4Fe-4S] cluster site.

The protein belongs to the radical SAM superfamily. CofH family. In terms of assembly, consists of two subunits, CofG and CofH. It depends on [4Fe-4S] cluster as a cofactor.

It catalyses the reaction 5-amino-6-(D-ribitylamino)uracil + L-tyrosine + S-adenosyl-L-methionine = 5-amino-5-(4-hydroxybenzyl)-6-(D-ribitylimino)-5,6-dihydrouracil + 2-iminoacetate + 5'-deoxyadenosine + L-methionine + H(+). The protein operates within cofactor biosynthesis; coenzyme F0 biosynthesis. Its function is as follows. Catalyzes the radical-mediated synthesis of 5-amino-5-(4-hydroxybenzyl)-6-(D-ribitylimino)-5,6-dihydrouracil from 5-amino-6-(D-ribitylamino)uracil and L-tyrosine. The sequence is that of 5-amino-6-(D-ribitylamino)uracil--L-tyrosine 4-hydroxyphenyl transferase from Methanopyrus kandleri (strain AV19 / DSM 6324 / JCM 9639 / NBRC 100938).